A 121-amino-acid chain; its full sequence is Urotensin-2 (121 aa).

An N-terminal signal peptide occupies residues Met1–Ala19. The propeptide occupies Leu20–Tyr106. Cys115 and Cys120 are disulfide-bonded.

It belongs to the urotensin-2 family.

It is found in the secreted. In terms of biological role, highly potent vasoconstrictor. This Sus scrofa (Pig) protein is Urotensin-2 (UTS2).